A 136-amino-acid chain; its full sequence is Small ribosomal subunit protein uS9 (136 aa).

The disordered stretch occupies residues 111-136; the sequence is DARRTEPHKPSRSTKGPRAKRQKSYR. Basic residues predominate over residues 120–136; sequence PSRSTKGPRAKRQKSYR.

This sequence belongs to the universal ribosomal protein uS9 family.

This Methanocaldococcus jannaschii (strain ATCC 43067 / DSM 2661 / JAL-1 / JCM 10045 / NBRC 100440) (Methanococcus jannaschii) protein is Small ribosomal subunit protein uS9 (rps9).